The sequence spans 584 residues: 2-succinyl-5-enolpyruvyl-6-hydroxy-3-cyclohexene-1-carboxylate synthase (584 aa).

Residues 563–584 (TDAEASHRERERLADRVTGLSV) form a disordered region. Residues 566 to 577 (EASHRERERLAD) show a composition bias toward basic and acidic residues.

This sequence belongs to the TPP enzyme family. MenD subfamily. As to quaternary structure, homodimer. Requires Mg(2+) as cofactor. The cofactor is Mn(2+). It depends on thiamine diphosphate as a cofactor.

It catalyses the reaction isochorismate + 2-oxoglutarate + H(+) = 5-enolpyruvoyl-6-hydroxy-2-succinyl-cyclohex-3-ene-1-carboxylate + CO2. The protein operates within quinol/quinone metabolism; 1,4-dihydroxy-2-naphthoate biosynthesis; 1,4-dihydroxy-2-naphthoate from chorismate: step 2/7. It functions in the pathway quinol/quinone metabolism; menaquinone biosynthesis. Its function is as follows. Catalyzes the thiamine diphosphate-dependent decarboxylation of 2-oxoglutarate and the subsequent addition of the resulting succinic semialdehyde-thiamine pyrophosphate anion to isochorismate to yield 2-succinyl-5-enolpyruvyl-6-hydroxy-3-cyclohexene-1-carboxylate (SEPHCHC). The sequence is that of 2-succinyl-5-enolpyruvyl-6-hydroxy-3-cyclohexene-1-carboxylate synthase from Halobacterium salinarum (strain ATCC 29341 / DSM 671 / R1).